A 351-amino-acid chain; its full sequence is Protein FAM118B (351 aa).

Ala-2 carries the post-translational modification N-acetylalanine. Ser-9 is subject to Phosphoserine.

It belongs to the FAM118 family.

It localises to the nucleus. Its subcellular location is the cajal body. May play a role in Cajal bodies formation. In Bos taurus (Bovine), this protein is Protein FAM118B (FAM118B).